A 214-amino-acid chain; its full sequence is Nicotinamidase (214 aa).

Residue aspartate 18 is the Proton acceptor of the active site. A divalent metal cation is bound by residues aspartate 56, histidine 58, histidine 62, and histidine 91. Lysine 116 is an active-site residue. Cysteine 161 serves as the catalytic Nucleophile.

This sequence belongs to the isochorismatase family. The cofactor is a divalent metal cation.

It catalyses the reaction nicotinamide + H2O = nicotinate + NH4(+). The protein operates within cofactor biosynthesis; nicotinate biosynthesis; nicotinate from nicotinamide: step 1/1. Functionally, catalyzes the deamidation of nicotinamide (NAM) into nicotinate (Na). Functions in the deamidating salvage pathway for production of NAD from nicotinamide. The chain is Nicotinamidase from Acinetobacter baylyi (strain ATCC 33305 / BD413 / ADP1).